The chain runs to 643 residues: U3 small nucleolar RNA-associated protein 5 (643 aa).

6 WD repeats span residues 14–54, 55–98, 186–225, 227–266, 340–389, and 471–511; these read GQYL…LYLE, DSKL…VTYK, GHVS…TKCV, VAES…SSTK, SADR…LEQE, and RLKP…IHGG. The segment at 565 to 643 is disordered; sequence HSSEPVVEED…EAGYSDVEME (79 aa). Positions 570–611 are enriched in acidic residues; it reads VVEEDEDDVEYNEELDDAGLIEDGEESYGSEEEEEGDSDNEE. Positions 612–626 are enriched in basic and acidic residues; that stretch reads EQKHTSSKQDGRLET. A compositionally biased stretch (acidic residues) spans 627 to 643; the sequence is EQSDGEEEAGYSDVEME.

Belongs to the UTP5 family. In terms of assembly, interacts with snoRNA U3. Interacts with MPP10. Component of the ribosomal small subunit (SSU) processome composed of at least 40 protein subunits and snoRNA U3. In the absence of snoRNA3, forms a complex with other t-UTPs. This complex can associate with pre-18S ribosomal RNAs.

The protein resides in the nucleus. It localises to the nucleolus. Functionally, involved in nucleolar processing of pre-18S ribosomal RNA. Required for optimal pre-ribosomal RNA transcription by RNA polymerase I together with a subset of U3 proteins required for transcription (t-UTPs). This Saccharomyces cerevisiae (strain ATCC 204508 / S288c) (Baker's yeast) protein is U3 small nucleolar RNA-associated protein 5 (UTP5).